The chain runs to 337 residues: Anthranilate phosphoribosyltransferase (337 aa).

5-phospho-alpha-D-ribose 1-diphosphate contacts are provided by residues G80, 83–84 (GD), T88, 90–93 (NIST), 108–116 (KHGNRSVSS), and S120. G80 serves as a coordination point for anthranilate. Residue S92 coordinates Mg(2+). N111 serves as a coordination point for anthranilate. R166 is an anthranilate binding site. Mg(2+) contacts are provided by D225 and E226.

It belongs to the anthranilate phosphoribosyltransferase family. Homodimer. Requires Mg(2+) as cofactor.

The enzyme catalyses N-(5-phospho-beta-D-ribosyl)anthranilate + diphosphate = 5-phospho-alpha-D-ribose 1-diphosphate + anthranilate. Its pathway is amino-acid biosynthesis; L-tryptophan biosynthesis; L-tryptophan from chorismate: step 2/5. In terms of biological role, catalyzes the transfer of the phosphoribosyl group of 5-phosphorylribose-1-pyrophosphate (PRPP) to anthranilate to yield N-(5'-phosphoribosyl)-anthranilate (PRA). The chain is Anthranilate phosphoribosyltransferase from Syntrophobacter fumaroxidans (strain DSM 10017 / MPOB).